The following is a 162-amino-acid chain: 6,7-dimethyl-8-ribityllumazine synthase (162 aa).

5-amino-6-(D-ribitylamino)uracil is bound by residues phenylalanine 22, 56 to 58 (TFE), and 80 to 82 (AVI). 85-86 (GT) contributes to the (2S)-2-hydroxy-3-oxobutyl phosphate binding site. The Proton donor role is filled by histidine 88. 5-amino-6-(D-ribitylamino)uracil is bound at residue methionine 113. Arginine 127 is a binding site for (2S)-2-hydroxy-3-oxobutyl phosphate.

Belongs to the DMRL synthase family.

It carries out the reaction (2S)-2-hydroxy-3-oxobutyl phosphate + 5-amino-6-(D-ribitylamino)uracil = 6,7-dimethyl-8-(1-D-ribityl)lumazine + phosphate + 2 H2O + H(+). It participates in cofactor biosynthesis; riboflavin biosynthesis; riboflavin from 2-hydroxy-3-oxobutyl phosphate and 5-amino-6-(D-ribitylamino)uracil: step 1/2. Its function is as follows. Catalyzes the formation of 6,7-dimethyl-8-ribityllumazine by condensation of 5-amino-6-(D-ribitylamino)uracil with 3,4-dihydroxy-2-butanone 4-phosphate. This is the penultimate step in the biosynthesis of riboflavin. In Anaeromyxobacter dehalogenans (strain 2CP-C), this protein is 6,7-dimethyl-8-ribityllumazine synthase.